A 96-amino-acid polypeptide reads, in one-letter code: Small ribosomal subunit protein bS6 (96 aa).

This sequence belongs to the bacterial ribosomal protein bS6 family.

Functionally, binds together with bS18 to 16S ribosomal RNA. The protein is Small ribosomal subunit protein bS6 of Streptococcus suis (strain 98HAH33).